A 276-amino-acid chain; its full sequence is NADH-cytochrome b5 reductase 2 (276 aa).

In terms of domain architecture, FAD-binding FR-type spans 15 to 127; it reads EAKYPLPLIE…RGPTGRLFYN (113 aa). Lys-17 is subject to N6-acetyllysine. The residue at position 18 (Tyr-18) is a Phosphotyrosine. FAD contacts are provided by residues 107-137 and 146-181; these read ENMK…IKTD and LVHH…RMSL.

This sequence belongs to the flavoprotein pyridine nucleotide cytochrome reductase family. It depends on FAD as a cofactor.

It catalyses the reaction 2 Fe(III)-[cytochrome b5] + NADH = 2 Fe(II)-[cytochrome b5] + NAD(+) + H(+). In terms of biological role, NADH-cytochrome b5 reductases are involved in desaturation and elongation of fatty acids, cholesterol biosynthesis, drug metabolism, and, in erythrocyte, methemoglobin reduction. Responsible for NADH-dependent lucigenin chemiluminescence in spermatozoa by reducing both lucigenin and 2-[4-iodophenyl]-3-[4-nitrophenyl]-5-[2,4-disulfophenyl]-2H tetrazolium monosodium salt (WST-1). This chain is NADH-cytochrome b5 reductase 2 (Cyb5r2), found in Rattus norvegicus (Rat).